The primary structure comprises 143 residues: Acetyltransferase plu1384 (143 aa).

An N-acetyltransferase domain is found at 1-138 (MEIRVFRQDD…ESVIFSKRLI (138 aa)).

It belongs to the acetyltransferase family. YpeA subfamily.

This Photorhabdus laumondii subsp. laumondii (strain DSM 15139 / CIP 105565 / TT01) (Photorhabdus luminescens subsp. laumondii) protein is Acetyltransferase plu1384.